We begin with the raw amino-acid sequence, 158 residues long: SsrA-binding protein (158 aa).

Belongs to the SmpB family.

The protein localises to the cytoplasm. In terms of biological role, required for rescue of stalled ribosomes mediated by trans-translation. Binds to transfer-messenger RNA (tmRNA), required for stable association of tmRNA with ribosomes. tmRNA and SmpB together mimic tRNA shape, replacing the anticodon stem-loop with SmpB. tmRNA is encoded by the ssrA gene; the 2 termini fold to resemble tRNA(Ala) and it encodes a 'tag peptide', a short internal open reading frame. During trans-translation Ala-aminoacylated tmRNA acts like a tRNA, entering the A-site of stalled ribosomes, displacing the stalled mRNA. The ribosome then switches to translate the ORF on the tmRNA; the nascent peptide is terminated with the 'tag peptide' encoded by the tmRNA and targeted for degradation. The ribosome is freed to recommence translation, which seems to be the essential function of trans-translation. This is SsrA-binding protein from Symbiobacterium thermophilum (strain DSM 24528 / JCM 14929 / IAM 14863 / T).